Reading from the N-terminus, the 104-residue chain is BLOC-1-related complex subunit 7 (104 aa).

The protein belongs to the BORCS7 family.

The protein resides in the lysosome membrane. As part of a BORC-like complex may play a role in lysosomes movement and localization at the cell periphery. Associated with the cytosolic face of lysosomes, this complex may couple lysosomes to microtubule plus-end-directed kinesin motor. The polypeptide is BLOC-1-related complex subunit 7 (Xenopus tropicalis (Western clawed frog)).